The following is a 493-amino-acid chain: Vacuolar-processing enzyme (493 aa).

Residues 1 to 19 form the signal peptide; that stretch reads MGSSQLSTLLFFTIVVTFL. N-linked (GlcNAc...) asparagine glycosylation is present at Asn-147. His-174 is an active-site residue. Cys-216 functions as the Nucleophile in the catalytic mechanism. A disulfide bridge connects residues Cys-249 and Cys-263. N-linked (GlcNAc...) asparagine glycosylation is found at Asn-295 and Asn-331. Disulfide bonds link Cys-429-Cys-459 and Cys-441-Cys-476.

Belongs to the peptidase C13 family.

Its function is as follows. Asparagine-specific endopeptidase involved in the processing of vacuolar seed protein precursors into the mature forms. This Vicia sativa (Spring vetch) protein is Vacuolar-processing enzyme.